The sequence spans 198 residues: Armadillo repeat-containing protein 7 (198 aa).

2 ARM repeats span residues 57-99 (QVLD…HAGG) and 100-140 (VPLI…TATP). A Phosphoserine modification is found at S169.

In terms of assembly, component of the minor spliceosome. Within this complex, interacts with RBM48.

In terms of biological role, as a component of the minor spliceosome, involved in the splicing of U12-type introns in pre-mRNAs. This Homo sapiens (Human) protein is Armadillo repeat-containing protein 7 (ARMC7).